Here is a 1770-residue protein sequence, read N- to C-terminus: Transposon Ty2-DR3 Gag-Pol polyprotein (1770 aa).

6 stretches are compositionally biased toward polar residues: residues 1–11, 19–39, 49–60, 366–390, 399–408, and 415–435; these read MESQQLHQNPH, ASVT…SASN, KVNSQQETTPGT, VSRT…NSSK, IATSSKFSRV, and ESTV…GQQQ. Disordered stretches follow at residues 1–89 and 355–449; these read MESQ…QQHG and SQYK…SNDE. Positions 295–397 are RNA-binding; it reads ENNINVSDRL…SSKPRAAKAH (103 aa). Residue D457 is the For protease activity; shared with dimeric partner of the active site. An integrase-type zinc finger-like region spans residues 579–636; sequence NVNKSKSVNKYPYPLIHRMLGHANFRSIQKSLKKNAVTYLKESDIEWSNASTYQCPDC. The Integrase catalytic domain occupies 656–831; it reads ESYEPFQYLH…AGLDITTILP (176 aa). Mg(2+) contacts are provided by D667 and D732. Disordered regions lie at residues 1005–1038 and 1057–1205; these read GGTI…MIDL and GGTE…TEIE. Polar residues-rich tracts occupy residues 1009–1024 and 1065–1082; these read ESDT…FTAR and QRNS…STPS. The Bipartite nuclear localization signal signature appears at 1193–1227; it reads KKRSLEDNETEIEVSRDTWNNKNMRSLEPPRSKKR. A Reverse transcriptase Ty1/copia-type domain is found at 1353–1491; it reads NDYYITQLDI…DILGLEIKYQ (139 aa). Residues D1361, D1442, D1443, D1625, E1667, and D1700 each contribute to the Mg(2+) site. The RNase H Ty1/copia-type domain maps to 1625 to 1767; that stretch reads DASYGNQPYY…IKTFKLLTNK (143 aa).

As to quaternary structure, the capsid protein forms a homotrimer, from which the VLPs are assembled. The protease is a homodimer, whose active site consists of two apposed aspartic acid residues. Initially, virus-like particles (VLPs) are composed of the structural unprocessed proteins Gag and Gag-Pol, and also contain the host initiator methionine tRNA (tRNA(i)-Met) which serves as a primer for minus-strand DNA synthesis, and a dimer of genomic Ty RNA. Processing of the polyproteins occurs within the particle and proceeds by an ordered pathway, called maturation. First, the protease (PR) is released by autocatalytic cleavage of the Gag-Pol polyprotein, and this cleavage is a prerequisite for subsequent processing at the remaining sites to release the mature structural and catalytic proteins. Maturation takes place prior to the RT reaction and is required to produce transposition-competent VLPs.

The protein resides in the cytoplasm. It localises to the nucleus. It catalyses the reaction DNA(n) + a 2'-deoxyribonucleoside 5'-triphosphate = DNA(n+1) + diphosphate. It carries out the reaction Endonucleolytic cleavage to 5'-phosphomonoester.. In terms of biological role, capsid protein (CA) is the structural component of the virus-like particle (VLP), forming the shell that encapsulates the retrotransposons dimeric RNA genome. The particles are assembled from trimer-clustered units and there are holes in the capsid shells that allow for the diffusion of macromolecules. CA also has nucleocapsid-like chaperone activity, promoting primer tRNA(i)-Met annealing to the multipartite primer-binding site (PBS), dimerization of Ty2 RNA and initiation of reverse transcription. Its function is as follows. The aspartyl protease (PR) mediates the proteolytic cleavages of the Gag and Gag-Pol polyproteins after assembly of the VLP. Functionally, reverse transcriptase/ribonuclease H (RT) is a multifunctional enzyme that catalyzes the conversion of the retro-elements RNA genome into dsDNA within the VLP. The enzyme displays a DNA polymerase activity that can copy either DNA or RNA templates, and a ribonuclease H (RNase H) activity that cleaves the RNA strand of RNA-DNA heteroduplexes during plus-strand synthesis and hydrolyzes RNA primers. The conversion leads to a linear dsDNA copy of the retrotransposon that includes long terminal repeats (LTRs) at both ends. Integrase (IN) targets the VLP to the nucleus, where a subparticle preintegration complex (PIC) containing at least integrase and the newly synthesized dsDNA copy of the retrotransposon must transit the nuclear membrane. Once in the nucleus, integrase performs the integration of the dsDNA into the host genome. The sequence is that of Transposon Ty2-DR3 Gag-Pol polyprotein (TY2B-DR3) from Saccharomyces cerevisiae (strain ATCC 204508 / S288c) (Baker's yeast).